Here is an 86-residue protein sequence, read N- to C-terminus: Large ribosomal subunit protein bL31B (86 aa).

This sequence belongs to the bacterial ribosomal protein bL31 family. Type B subfamily. In terms of assembly, part of the 50S ribosomal subunit.

In Salmonella paratyphi A (strain ATCC 9150 / SARB42), this protein is Large ribosomal subunit protein bL31B.